The following is a 335-amino-acid chain: Tyrosine-protein phosphatase 1 (335 aa).

Positions 15–328 constitute a Tyrosine-protein phosphatase domain; that stretch reads LLGKFKFIQN…LFIYHAAKYL (314 aa). Position 83 is a phosphoserine; by CLK1 (serine 83). Cysteine 252 serves as the catalytic Phosphocysteine intermediate.

It belongs to the protein-tyrosine phosphatase family. Non-receptor class subfamily. Post-translationally, activated by phosphorylation at Ser-83.

Its subcellular location is the cytoplasm. The catalysed reaction is O-phospho-L-tyrosyl-[protein] + H2O = L-tyrosyl-[protein] + phosphate. Is not required for vegetative growth. The protein is Tyrosine-protein phosphatase 1 (PTP1) of Saccharomyces cerevisiae (strain ATCC 204508 / S288c) (Baker's yeast).